The sequence spans 285 residues: Nucleotide-binding protein HI_1146 (285 aa).

8–15 provides a ligand contact to ATP; the sequence is GRSGAGKS. 56–59 contacts GTP; the sequence is DIRN.

The protein belongs to the RapZ-like family.

Displays ATPase and GTPase activities. This chain is Nucleotide-binding protein HI_1146, found in Haemophilus influenzae (strain ATCC 51907 / DSM 11121 / KW20 / Rd).